A 313-amino-acid chain; its full sequence is Ornithine carbamoyltransferase (313 aa).

Carbamoyl phosphate is bound by residues 57 to 60, glutamine 84, arginine 108, and 135 to 138; these read STRT and HPTQ. L-ornithine-binding positions include asparagine 167, aspartate 231, and 235–236; that span reads SM. Carbamoyl phosphate-binding positions include 272 to 273 and arginine 300; that span reads CL.

This sequence belongs to the aspartate/ornithine carbamoyltransferase superfamily. OTCase family.

Its subcellular location is the cytoplasm. It carries out the reaction carbamoyl phosphate + L-ornithine = L-citrulline + phosphate + H(+). Its pathway is amino-acid biosynthesis; L-arginine biosynthesis; L-arginine from L-ornithine and carbamoyl phosphate: step 1/3. Functionally, reversibly catalyzes the transfer of the carbamoyl group from carbamoyl phosphate (CP) to the N(epsilon) atom of ornithine (ORN) to produce L-citrulline. The polypeptide is Ornithine carbamoyltransferase (Caldanaerobacter subterraneus subsp. tengcongensis (strain DSM 15242 / JCM 11007 / NBRC 100824 / MB4) (Thermoanaerobacter tengcongensis)).